Reading from the N-terminus, the 405-residue chain is Type II secretion system protein F (405 aa).

Residues 1–169 (MPLYRYKALD…SRALKGKVIN (169 aa)) are Cytoplasmic-facing. Positions 98, 151, and 155 each coordinate Ca(2+). Residues 170–190 (ALIYPAILLAVVGCALLFLLG) form a helical membrane-spanning segment. The Periplasmic portion of the chain corresponds to 191–218 (YVVPQFAQMYESLDVALPWFTQAVLSVG). The chain crosses the membrane as a helical span at residues 219 to 239 (LLVRDWWLVLVVIPGVLGLWL). The Cytoplasmic segment spans residues 240–370 (DRKRRNAAFR…LETAQAIDRA (131 aa)). A helical membrane pass occupies residues 371 to 391 (LAALVPLITLVLASVVGLVII). Over 392 to 405 (SVLVPLYDLTNAIG) the chain is Periplasmic.

The protein belongs to the GSP F family. As to quaternary structure, type II secretion system is composed of four main components: the outer membrane complex, the inner membrane complex, the cytoplasmic secretion ATPase and the periplasm-spanning pseudopilus. Homodimer. Interacts with XpsE and XpsL components.

Its subcellular location is the cell inner membrane. Its function is as follows. Component of the type II secretion system inner membrane complex required for the energy-dependent secretion of extracellular factors such as proteases and toxins from the periplasm. This Xanthomonas campestris pv. campestris (strain ATCC 33913 / DSM 3586 / NCPPB 528 / LMG 568 / P 25) protein is Type II secretion system protein F (xpsF).